A 640-amino-acid chain; its full sequence is Dextranase (640 aa).

Residues 1–32 (MPGTGLGRLAKHVTAAAAVFLISTGAVLPAQA) form the signal peptide.

The protein belongs to the glycosyl hydrolase 49 family.

It is found in the secreted. It catalyses the reaction Endohydrolysis of (1-&gt;6)-alpha-D-glucosidic linkages in dextran.. The polypeptide is Dextranase (Arthrobacter globiformis).